A 311-amino-acid polypeptide reads, in one-letter code: GTPase Era (311 aa).

One can recognise an Era-type G domain in the interval 18–185 (RSGFVALIGA…AKYLAESVPN (168 aa)). A G1 region spans residues 26–33 (GAPNAGKS). 26 to 33 (GAPNAGKS) serves as a coordination point for GTP. Residues 52 to 56 (QTTRA) are G2. The interval 73–76 (DTPG) is G3. Residues 73-77 (DTPGI) and 135-138 (NKVD) each bind GTP. The G4 stretch occupies residues 135–138 (NKVD). A G5 region spans residues 164–166 (ISA). In terms of domain architecture, KH type-2 spans 216–293 (LHEELPYAST…HLFLFVKVRE (78 aa)).

Belongs to the TRAFAC class TrmE-Era-EngA-EngB-Septin-like GTPase superfamily. Era GTPase family. As to quaternary structure, monomer.

It localises to the cytoplasm. The protein localises to the cell inner membrane. An essential GTPase that binds both GDP and GTP, with rapid nucleotide exchange. Plays a role in 16S rRNA processing and 30S ribosomal subunit biogenesis and possibly also in cell cycle regulation and energy metabolism. This chain is GTPase Era, found in Brucella suis biovar 1 (strain 1330).